The sequence spans 158 residues: Small ribosomal subunit protein bS16 (158 aa).

Low complexity predominate over residues 111 to 121; sequence AAAGLAEAPTK. The disordered stretch occupies residues 111–158; the sequence is AAAGLAEAPTKPAKKAPKAEAAPKTEAAPKADAPKTEEQAGAGSGEQG. The span at 127-148 shows a compositional bias: basic and acidic residues; that stretch reads PKAEAAPKTEAAPKADAPKTEE.

It belongs to the bacterial ribosomal protein bS16 family.

This is Small ribosomal subunit protein bS16 from Salinispora arenicola (strain CNS-205).